The chain runs to 141 residues: Pancreatic progenitor cell differentiation and proliferation factor-like protein (141 aa).

A disordered region spans residues 72–141 (DQSACGGNGP…GAPKDTNSPQ (70 aa)). The span at 95–105 (SLLQQEESQLL) shows a compositional bias: low complexity. The segment covering 112–122 (GTVNRFRNSQT) has biased composition (polar residues).

Belongs to the PPDPF family.

The chain is Pancreatic progenitor cell differentiation and proliferation factor-like protein from Bos taurus (Bovine).